Here is a 552-residue protein sequence, read N- to C-terminus: MNAASRTKLNQTPEWTALAKHREELGAPRLRELFARQPDRGTAYTLRVGDLHLDYSKHLVTDETLRLLRELAAATGVAELREAMFRGEKINTTEDRAVLHTALRAPRDAVVEVDGENVVPAVHAVLDKMAGFAEKVRSGQWTGHTGKPVKNIVNIGIGGSDLGPAMAYEVLRSFTDRDLTLRFVSNVDGADLHEAVRDLDPAETLFVIASKTFTTIETITNATSARDWLLTELRTGQDAVAKHFVALSTNAEKVEEFGIDTANMFEFWDWVGGRYSYDSAIGLSLMVAIGPDRFREMLEGFHLVDEHFRTAPPEENAPLLLGLLGVWYGNFFDAQSHAVLPYSHYLSKFTAYLQQLDMESNGKSVDRDGNPVDWQTGPVVWGTPGTNGQHAYYQLIHQGTKLIPADFIGFAAPVHDLLPGLIAQHDLLMANFFAQTQALAFGKTPEEVRAEGVPEELVPHKTFRGNHPTTTILADKLTPSVLGQLIALYEHKVFVQGAIWNIDSFDQWGVELGKVLAKKIEPLLTGDGGADAGELDSSTAALVDAYRTLRGR.

Glu359 (proton donor) is an active-site residue. Residues His390 and Lys514 contribute to the active site.

Belongs to the GPI family.

It is found in the cytoplasm. The enzyme catalyses alpha-D-glucose 6-phosphate = beta-D-fructose 6-phosphate. It participates in carbohydrate biosynthesis; gluconeogenesis. Its pathway is carbohydrate degradation; glycolysis; D-glyceraldehyde 3-phosphate and glycerone phosphate from D-glucose: step 2/4. Catalyzes the reversible isomerization of glucose-6-phosphate to fructose-6-phosphate. This is Glucose-6-phosphate isomerase from Streptomyces griseus subsp. griseus (strain JCM 4626 / CBS 651.72 / NBRC 13350 / KCC S-0626 / ISP 5235).